Here is a 212-residue protein sequence, read N- to C-terminus: Orotate phosphoribosyltransferase (212 aa).

Residues Arg-97, Lys-101, His-103, and 123–131 each bind 5-phospho-alpha-D-ribose 1-diphosphate; that span reads EDLISTGGS. Orotate is bound at residue Ser-127.

Belongs to the purine/pyrimidine phosphoribosyltransferase family. PyrE subfamily. In terms of assembly, homodimer. The cofactor is Mg(2+).

The catalysed reaction is orotidine 5'-phosphate + diphosphate = orotate + 5-phospho-alpha-D-ribose 1-diphosphate. Its pathway is pyrimidine metabolism; UMP biosynthesis via de novo pathway; UMP from orotate: step 1/2. In terms of biological role, catalyzes the transfer of a ribosyl phosphate group from 5-phosphoribose 1-diphosphate to orotate, leading to the formation of orotidine monophosphate (OMP). This Bacteroides thetaiotaomicron (strain ATCC 29148 / DSM 2079 / JCM 5827 / CCUG 10774 / NCTC 10582 / VPI-5482 / E50) protein is Orotate phosphoribosyltransferase.